The chain runs to 533 residues: MKQIWQALKAHQQAVEHRGILDLFTDPRRAETFSTRLGDMLFDWSKTNIDHTARDLLIDLAGAAGVAEKREAMFSGEKINETEGRAVLHTALRNMDRPVQVDGVDVTPALRETHARMQAFVRDLRSGRFTGQGGPITDVVNIGIGGSDLGPAMACLALAPYADGPRCHFVSNVDGAHIHDTLQDLDPATTLVIVASKTFTTIETMTNAETAKRWMATRVSDPAAQFAAVSTAADRTAAFGIDASRVFGFEDWVGGRYSMWGPIGLALMIAIGPEAFDAFLAGGAEMDRHFREAPFAENLPVLLALVGLWHNQICGHATRAVLPYDQRLARLPAYLQQLEMESNGKRVAMDGHELTHHSGPIVWGEPGTNGQHAFYQLIHQGSRIVPCEFLVAREGHEPDLAHQHLLLVSNCLAQSEALLRGRSVEEARAVLAKKGLTGSELERQARHRVFPGNRPSTVLAYEKLTPATLGRIVALYEHRVFVEGVILGINSYDQWGVELGKELALALQPMLEGRAGTEGKDGSTAQLVAYLRS.

E341 functions as the Proton donor in the catalytic mechanism. Active-site residues include H372 and K501.

It belongs to the GPI family.

The protein resides in the cytoplasm. The catalysed reaction is alpha-D-glucose 6-phosphate = beta-D-fructose 6-phosphate. Its pathway is carbohydrate biosynthesis; gluconeogenesis. It functions in the pathway carbohydrate degradation; glycolysis; D-glyceraldehyde 3-phosphate and glycerone phosphate from D-glucose: step 2/4. Its function is as follows. Catalyzes the reversible isomerization of glucose-6-phosphate to fructose-6-phosphate. The protein is Glucose-6-phosphate isomerase of Cereibacter sphaeroides (strain ATCC 17029 / ATH 2.4.9) (Rhodobacter sphaeroides).